Consider the following 904-residue polypeptide: Phosphoenolpyruvate carboxylase (904 aa).

The disordered stretch occupies residues 52–71 (ISRRESDAPPSTLSEQLTGR). Positions 60 to 70 (PPSTLSEQLTG) are enriched in polar residues. Catalysis depends on residues histidine 151 and lysine 570.

This sequence belongs to the PEPCase type 1 family. Mg(2+) serves as cofactor.

It carries out the reaction oxaloacetate + phosphate = phosphoenolpyruvate + hydrogencarbonate. Forms oxaloacetate, a four-carbon dicarboxylic acid source for the tricarboxylic acid cycle. The sequence is that of Phosphoenolpyruvate carboxylase from Xanthomonas euvesicatoria pv. vesicatoria (strain 85-10) (Xanthomonas campestris pv. vesicatoria).